The chain runs to 307 residues: Methionyl-tRNA formyltransferase (307 aa).

Residue 108 to 111 (SLLP) coordinates (6S)-5,6,7,8-tetrahydrofolate.

This sequence belongs to the Fmt family.

The enzyme catalyses L-methionyl-tRNA(fMet) + (6R)-10-formyltetrahydrofolate = N-formyl-L-methionyl-tRNA(fMet) + (6S)-5,6,7,8-tetrahydrofolate + H(+). Functionally, attaches a formyl group to the free amino group of methionyl-tRNA(fMet). The formyl group appears to play a dual role in the initiator identity of N-formylmethionyl-tRNA by promoting its recognition by IF2 and preventing the misappropriation of this tRNA by the elongation apparatus. The polypeptide is Methionyl-tRNA formyltransferase (Xanthomonas campestris pv. campestris (strain 8004)).